A 305-amino-acid polypeptide reads, in one-letter code: UDP-3-O-acyl-N-acetylglucosamine deacetylase (305 aa).

3 residues coordinate Zn(2+): H79, H238, and D242. H265 acts as the Proton donor in catalysis.

Belongs to the LpxC family. Zn(2+) serves as cofactor.

The enzyme catalyses a UDP-3-O-[(3R)-3-hydroxyacyl]-N-acetyl-alpha-D-glucosamine + H2O = a UDP-3-O-[(3R)-3-hydroxyacyl]-alpha-D-glucosamine + acetate. It participates in glycolipid biosynthesis; lipid IV(A) biosynthesis; lipid IV(A) from (3R)-3-hydroxytetradecanoyl-[acyl-carrier-protein] and UDP-N-acetyl-alpha-D-glucosamine: step 2/6. Catalyzes the hydrolysis of UDP-3-O-myristoyl-N-acetylglucosamine to form UDP-3-O-myristoylglucosamine and acetate, the committed step in lipid A biosynthesis. In Vibrio atlanticus (strain LGP32) (Vibrio splendidus (strain Mel32)), this protein is UDP-3-O-acyl-N-acetylglucosamine deacetylase.